The chain runs to 369 residues: Putative esterase slr0264 (369 aa).

Active-site charge relay system residues include serine 162, aspartate 303, and histidine 334.

The protein belongs to the AB hydrolase superfamily. AB hydrolase 4 family.

The chain is Putative esterase slr0264 from Synechocystis sp. (strain ATCC 27184 / PCC 6803 / Kazusa).